The sequence spans 177 residues: 2''-aminoglycoside nucleotidyltransferase (177 aa).

The interval 1 to 92 (MDTTQVTLIH…ELLDCEPAWW (92 aa)) is N-terminal domain. 3 residues coordinate Mg(2+): Asp-44, Asp-46, and Asp-86. The active-site Proton acceptor is Asp-86. The interval 93–177 (ADEAYEIAEA…RAAFRSRYAA (85 aa)) is C-terminal domain. A kanamycin A-binding site is contributed by Ala-100.

Monomer. The cofactor is Mg(2+).

The catalysed reaction is nucleoside triphosphate + gentamicin = diphosphate + 2''-nucleotidylgentamicin.. Mediates bacterial resistance to kanamycin, gentamicin, dibekacin, sisomicin and tobramycin by adenylating the 2''-hydroxyl group of these antibiotics. The polypeptide is 2''-aminoglycoside nucleotidyltransferase (Klebsiella pneumoniae).